Here is a 546-residue protein sequence, read N- to C-terminus: Phosphoglucomutase (546 aa).

Ser-135 (phosphoserine intermediate) is an active-site residue. The Mg(2+) site is built by Ser-135, Asp-288, Asp-290, and Asp-292.

The protein belongs to the phosphohexose mutase family. The cofactor is Mg(2+).

It catalyses the reaction alpha-D-glucose 1-phosphate = alpha-D-glucose 6-phosphate. It functions in the pathway glycolipid metabolism; diglucosyl-diacylglycerol biosynthesis. Its function is as follows. Catalyzes the interconversion between glucose-6-phosphate and alpha-glucose-1-phosphate. This is the first step in the biosynthesis of diglucosyl-diacylglycerol (Glc2-DAG), i.e. a glycolipid found in the membrane, which is also used as a membrane anchor for lipoteichoic acid (LTA). This Staphylococcus epidermidis (strain ATCC 12228 / FDA PCI 1200) protein is Phosphoglucomutase (pgcA).